Consider the following 430-residue polypeptide: Glutamate-1-semialdehyde 2,1-aminomutase (430 aa).

The residue at position 267 (lysine 267) is an N6-(pyridoxal phosphate)lysine.

It belongs to the class-III pyridoxal-phosphate-dependent aminotransferase family. HemL subfamily. As to quaternary structure, homodimer. Requires pyridoxal 5'-phosphate as cofactor.

The protein resides in the cytoplasm. The catalysed reaction is (S)-4-amino-5-oxopentanoate = 5-aminolevulinate. Its pathway is porphyrin-containing compound metabolism; protoporphyrin-IX biosynthesis; 5-aminolevulinate from L-glutamyl-tRNA(Glu): step 2/2. In Lawsonia intracellularis (strain PHE/MN1-00), this protein is Glutamate-1-semialdehyde 2,1-aminomutase.